The chain runs to 113 residues: Na(+)/H(+) antiporter subunit C1 (113 aa).

3 consecutive transmembrane segments (helical) span residues 1-21, 28-48, and 72-92; these read MEII…YLVL, IVMG…TMGG, and LILT…VLAF.

This sequence belongs to the CPA3 antiporters (TC 2.A.63) subunit C family. May form a heterooligomeric complex that consists of seven subunits: mnhA1, mnhB1, mnhC1, mnhD1, mnhE1, mnhF1 and mnhG1.

It localises to the cell membrane. Its function is as follows. Mnh complex is a Na(+)/H(+) antiporter involved in Na(+) excretion. This chain is Na(+)/H(+) antiporter subunit C1 (mnhC1), found in Staphylococcus aureus (strain JH1).